The following is a 93-amino-acid chain: Small ribosomal subunit protein bS16 (93 aa).

It belongs to the bacterial ribosomal protein bS16 family.

This chain is Small ribosomal subunit protein bS16, found in Roseiflexus castenholzii (strain DSM 13941 / HLO8).